Consider the following 119-residue polypeptide: Large ribosomal subunit protein uL18 (119 aa).

Residues 1 to 20 are disordered; that stretch reads MISKPDKNKTRQKRHTRVRG. Basic residues predominate over residues 10–20; it reads TRQKRHTRVRG.

It belongs to the universal ribosomal protein uL18 family. As to quaternary structure, part of the 50S ribosomal subunit; part of the 5S rRNA/L5/L18/L25 subcomplex. Contacts the 5S and 23S rRNAs.

Functionally, this is one of the proteins that bind and probably mediate the attachment of the 5S RNA into the large ribosomal subunit, where it forms part of the central protuberance. This is Large ribosomal subunit protein uL18 from Latilactobacillus sakei subsp. sakei (strain 23K) (Lactobacillus sakei subsp. sakei).